The sequence spans 286 residues: Acetyl-coenzyme A carboxylase carboxyl transferase subunit beta (286 aa).

In terms of domain architecture, CoA carboxyltransferase N-terminal spans 23–286 (IWVKCNNCNQ…ITNKPEPKKE (264 aa)). Positions 27, 30, 46, and 49 each coordinate Zn(2+). Residues 27–49 (CNNCNQMIYKIELEKNLEVCPKC) form a C4-type zinc finger.

This sequence belongs to the AccD/PCCB family. Acetyl-CoA carboxylase is a heterohexamer composed of biotin carboxyl carrier protein (AccB), biotin carboxylase (AccC) and two subunits each of ACCase subunit alpha (AccA) and ACCase subunit beta (AccD). Zn(2+) is required as a cofactor.

Its subcellular location is the cytoplasm. It carries out the reaction N(6)-carboxybiotinyl-L-lysyl-[protein] + acetyl-CoA = N(6)-biotinyl-L-lysyl-[protein] + malonyl-CoA. The protein operates within lipid metabolism; malonyl-CoA biosynthesis; malonyl-CoA from acetyl-CoA: step 1/1. Component of the acetyl coenzyme A carboxylase (ACC) complex. Biotin carboxylase (BC) catalyzes the carboxylation of biotin on its carrier protein (BCCP) and then the CO(2) group is transferred by the transcarboxylase to acetyl-CoA to form malonyl-CoA. The chain is Acetyl-coenzyme A carboxylase carboxyl transferase subunit beta from Wigglesworthia glossinidia brevipalpis.